Consider the following 302-residue polypeptide: Cell division protein FtsQ (302 aa).

The Cytoplasmic segment spans residues 1–43 (MRPVDKKPVDRKIERETRYLRRDPAPSRWSYRYQRLMLTPAFR). A helical membrane pass occupies residues 44–64 (AGVRLGTPVIIIALAVAVVFG). The Periplasmic segment spans residues 65-302 (RADSRDWIMG…SMPGRSAGRG (238 aa)). Residues 89-156 (FMVGSFAITG…GVLQIVIEER (68 aa)) enclose the POTRA domain.

Belongs to the FtsQ/DivIB family. FtsQ subfamily.

The protein resides in the cell inner membrane. Essential cell division protein. This Ketogulonicigenium vulgare (strain Y25) protein is Cell division protein FtsQ.